The chain runs to 272 residues: MADS-box transcription factor 58 (272 aa).

The interval Met1–Lys41 is disordered. Positions Gly27–Ser36 are enriched in gly residues. The region spanning Gly43 to Ser103 is the MADS-box domain. The K-box domain occupies Ala129 to Gly219.

Expressed in the lodicule, stamen carpel and ovule primordia.

It localises to the nucleus. Functionally, probable transcription factor involved in the development of floral organs. Acts as a C-class protein in association with MADS3. Involved in the control of lodicule number (whorl 2), stamen specification (whorl 3), floral meristem determinacy and regulation of the carpel morphogenesis (whorl 4). Plays a more predominant role in floral meristem determinacy than MADS3. The protein is MADS-box transcription factor 58 (MADS58) of Oryza sativa subsp. japonica (Rice).